The chain runs to 452 residues: Pup--protein ligase (452 aa).

Glu-9 provides a ligand contact to Mg(2+). Arg-53 contributes to the ATP binding site. Tyr-55 is a Mg(2+) binding site. The Proton acceptor role is filled by Asp-57. Residue Glu-63 coordinates Mg(2+). Residues Thr-66 and Trp-419 each coordinate ATP.

It belongs to the Pup ligase/Pup deamidase family. Pup-conjugating enzyme subfamily.

It carries out the reaction ATP + [prokaryotic ubiquitin-like protein]-L-glutamate + [protein]-L-lysine = ADP + phosphate + N(6)-([prokaryotic ubiquitin-like protein]-gamma-L-glutamyl)-[protein]-L-lysine.. It participates in protein degradation; proteasomal Pup-dependent pathway. The protein operates within protein modification; protein pupylation. Its function is as follows. Catalyzes the covalent attachment of the prokaryotic ubiquitin-like protein modifier Pup to the proteasomal substrate proteins, thereby targeting them for proteasomal degradation. This tagging system is termed pupylation. The ligation reaction involves the side-chain carboxylate of the C-terminal glutamate of Pup and the side-chain amino group of a substrate lysine. This is Pup--protein ligase from Mycobacterium ulcerans (strain Agy99).